The primary structure comprises 127 residues: uncharacterized protein (127 aa).

3 helical membrane passes run 16 to 36 (AVIG…CYVI), 59 to 79 (LVGA…SFLF), and 100 to 120 (IIGF…GGVI).

It is found in the cell membrane. This is an uncharacterized protein from Methanocaldococcus jannaschii (strain ATCC 43067 / DSM 2661 / JAL-1 / JCM 10045 / NBRC 100440) (Methanococcus jannaschii).